The sequence spans 453 residues: uncharacterized protein (453 aa).

Disordered regions lie at residues 15 to 42 and 425 to 453; these read LKRK…SETM and TNEI…RHAK. Polar residues predominate over residues 425–437; it reads TNEISSSNNSGTA. Residues 443–453 show a composition bias toward basic residues; that stretch reads QNRKRNRRHAK.

This is an uncharacterized protein from Caenorhabditis elegans.